Reading from the N-terminus, the 1691-residue chain is ADAMTS-like protein 3 (1691 aa).

Residues 1–26 form the signal peptide; it reads MASWTSPWWVLIGMVFMHSPLPQTTA. Positions 75-124 constitute a TSP type-1 1 domain; it reads DGNWDAWGDWSDCSRTCGGGASYSLRRCLTGRNCEGQNIRYKTCSNHDCP. 3 disulfides stabilise this stretch: C87–C118, C91–C123, and C102–C108. An N-linked (GlcNAc...) asparagine glycan is attached at N293. TSP type-1 domains follow at residues 418 to 468, 478 to 535, and 564 to 626; these read PLPR…APKP, DCPK…IPCY, and EEPT…EACD. Intrachain disulfides connect C576-C620, C580-C625, and C591-C609. Residue N681 is glycosylated (N-linked (GlcNAc...) asparagine). 3 TSP type-1 domains span residues 703 to 760, 763 to 818, and 819 to 881; these read CPPR…FDCP, WHIE…ARTD, and CPPH…PECS. N797 carries an N-linked (GlcNAc...) asparagine glycan. 3 disulfide bridges follow: C831–C875, C835–C880, and C846–C863. One can recognise an Ig-like C2-type 1 domain in the interval 896–992; the sequence is PQILSVQRVY…IAGSAQETVV (97 aa). N-linked (GlcNAc...) asparagine glycans are attached at residues N915 and N927. C934 and C982 are joined by a disulfide. N1102 carries an N-linked (GlcNAc...) asparagine glycan. Positions 1146-1184 are disordered; that stretch reads PPAAQLRGETGSVSQSSHAKNSGKLTFKPKGPVLMRQSQ. The segment covering 1156–1169 has biased composition (polar residues); it reads GSVSQSSHAKNSGK. The Ig-like C2-type 2 domain maps to 1185–1279; the sequence is PPSISFNKTI…GSDVESSSVL (95 aa). An N-linked (GlcNAc...) asparagine glycan is attached at N1191. C1215 and C1263 are joined by a disulfide. N-linked (GlcNAc...) asparagine glycosylation is found at N1292, N1316, N1330, N1343, N1349, N1356, N1432, N1516, N1574, and N1591. Residues 1296–1378 form the Ig-like C2-type 3 domain; sequence PEHNHLSVVV…ATNALGKAVA (83 aa). Cysteines 1321 and 1367 form a disulfide. TSP type-1 domains follow at residues 1424-1482 and 1483-1545; these read QEPF…NIRD and CPAR…HPCV. A TSP type-1 10 domain is found at 1597-1644; sequence CDVCWHTGPWKPCTAACGRGFQSRKVDCIHTRSCKPVAKRHCVQKKKP. A PLAC domain is found at 1655–1691; sequence CDRDCTDTTHYCMFVKHLNLCSLDRYKQRCCQSCQEG.

Post-translationally, glycosylated. Can be O-fucosylated by POFUT2 on a serine or a threonine residue found within the consensus sequence C1-X(2)-(S/T)-C2-G of the TSP type-1 repeat domains where C1 and C2 are the first and second cysteine residue of the repeat, respectively. Fucosylated repeats can then be further glycosylated by the addition of a beta-1,3-glucose residue by the glucosyltransferase, B3GALTL. Fucosylation mediates the efficient secretion of ADAMTS family members. Can also be C-glycosylated with one or two mannose molecules on tryptophan residues within the consensus sequence W-X-X-W of the TPRs, and N-glycosylated. These other glycosylations can also facilitate secretion. As to expression, expressed in epithelial cells of the colon, fallopian tube, skin, breast, prostate, epididymis, liver, pancreatic islets and bile ducts, as well as by vascular endothelial cells, smooth muscle cells, fibroblasts, cortical and ganglionic neurons and cardiac myocytes. Also expressed by malignant epithelial cells in colon cancer, as well as breast, prostate, renal and skin tumors. Expression is significantly reduced in colon cancer compared to normal colon.

It localises to the secreted. The protein resides in the extracellular space. The protein localises to the extracellular matrix. This chain is ADAMTS-like protein 3 (ADAMTSL3), found in Homo sapiens (Human).